Reading from the N-terminus, the 147-residue chain is Deoxyuridine 5'-triphosphate nucleotidohydrolase (147 aa).

Residues 63–65 (RSG), Asn-76, and 80–82 (TID) each bind substrate.

This sequence belongs to the dUTPase family. Mg(2+) serves as cofactor.

It carries out the reaction dUTP + H2O = dUMP + diphosphate + H(+). Its pathway is pyrimidine metabolism; dUMP biosynthesis; dUMP from dCTP (dUTP route): step 2/2. In terms of biological role, this enzyme is involved in nucleotide metabolism: it produces dUMP, the immediate precursor of thymidine nucleotides and it decreases the intracellular concentration of dUTP so that uracil cannot be incorporated into DNA. The polypeptide is Deoxyuridine 5'-triphosphate nucleotidohydrolase (Chlamydia caviae (strain ATCC VR-813 / DSM 19441 / 03DC25 / GPIC) (Chlamydophila caviae)).